The primary structure comprises 323 residues: Lipoyl synthase (323 aa).

Positions 61, 66, 72, 87, 91, 94, and 300 each coordinate [4Fe-4S] cluster. The 217-residue stretch at 73 to 289 (WDKKHATFMI…ETVAYSKGFL (217 aa)) folds into the Radical SAM core domain.

Belongs to the radical SAM superfamily. Lipoyl synthase family. [4Fe-4S] cluster is required as a cofactor.

The protein resides in the cytoplasm. The catalysed reaction is [[Fe-S] cluster scaffold protein carrying a second [4Fe-4S](2+) cluster] + N(6)-octanoyl-L-lysyl-[protein] + 2 oxidized [2Fe-2S]-[ferredoxin] + 2 S-adenosyl-L-methionine + 4 H(+) = [[Fe-S] cluster scaffold protein] + N(6)-[(R)-dihydrolipoyl]-L-lysyl-[protein] + 4 Fe(3+) + 2 hydrogen sulfide + 2 5'-deoxyadenosine + 2 L-methionine + 2 reduced [2Fe-2S]-[ferredoxin]. Its pathway is protein modification; protein lipoylation via endogenous pathway; protein N(6)-(lipoyl)lysine from octanoyl-[acyl-carrier-protein]: step 2/2. In terms of biological role, catalyzes the radical-mediated insertion of two sulfur atoms into the C-6 and C-8 positions of the octanoyl moiety bound to the lipoyl domains of lipoate-dependent enzymes, thereby converting the octanoylated domains into lipoylated derivatives. This chain is Lipoyl synthase, found in Rhizobium leguminosarum bv. trifolii (strain WSM2304).